A 204-amino-acid chain; its full sequence is Inactive ribonuclease-like protein 9 (204 aa).

Positions 1 to 26 (MMRTPITTHPLLLLLLLQQLLQPVQF) are cleaved as a signal peptide. Cystine bridges form between cysteine 97–cysteine 152, cysteine 115–cysteine 167, and cysteine 122–cysteine 129. N-linked (GlcNAc...) asparagine glycans are attached at residues asparagine 130 and asparagine 142.

This sequence belongs to the pancreatic ribonuclease family.

It localises to the secreted. Functionally, does not exhibit any ribonuclease activity. The polypeptide is Inactive ribonuclease-like protein 9 (RNASE9) (Macaca nemestrina (Pig-tailed macaque)).